The sequence spans 151 residues: Deoxyuridine 5'-triphosphate nucleotidohydrolase (151 aa).

Substrate contacts are provided by residues R70 to G72, N83, L87 to D89, and M97.

The protein belongs to the dUTPase family. Requires Mg(2+) as cofactor.

The enzyme catalyses dUTP + H2O = dUMP + diphosphate + H(+). It participates in pyrimidine metabolism; dUMP biosynthesis; dUMP from dCTP (dUTP route): step 2/2. In terms of biological role, this enzyme is involved in nucleotide metabolism: it produces dUMP, the immediate precursor of thymidine nucleotides and it decreases the intracellular concentration of dUTP so that uracil cannot be incorporated into DNA. The chain is Deoxyuridine 5'-triphosphate nucleotidohydrolase from Pseudomonas aeruginosa (strain UCBPP-PA14).